The primary structure comprises 1758 residues: Condensin-2 complex subunit hcp-6 (1758 aa).

Disordered stretches follow at residues 428 to 501 (DPGA…KAKE), 969 to 1008 (ENGSSDASTVNPDMPSVHHTRPPTQLSEVPSSQKSSKGGM), 1379 to 1460 (QKRL…ARLL), and 1500 to 1656 (SKQA…LSRG). The span at 438–462 (EQNEEEDEEEEGEDEEEEEENEQDD) shows a compositional bias: acidic residues. Residues 463–473 (VAVKEEEQSDK) are compositionally biased toward basic and acidic residues. Residues 474-484 (SDEENDGDNEE) show a composition bias toward acidic residues. Residues 485–501 (NVSKKKEEKKKEKKAKE) are compositionally biased toward basic and acidic residues. Over residues 969 to 979 (ENGSSDASTVN) the composition is skewed to polar residues. Residues 999–1008 (SSQKSSKGGM) are compositionally biased toward low complexity. Positions 1326-1385 (CIEHKNDIDEILQDNRQLKDEMMFELQRVKQRTEEANRILDEYLKRVAEFKKQQKRLSKS) form a coiled coil. The segment covering 1414–1423 (EDQENVEEEV) has biased composition (acidic residues). Composition is skewed to basic and acidic residues over residues 1424-1437 (EMRTPQKKNPDADV) and 1500-1512 (SKQADKTEEKTIV). 2 stretches are compositionally biased toward polar residues: residues 1602-1618 (ISANVTLRRSRRGQSTE) and 1640-1651 (VPTSSSGNTEND).

In terms of assembly, component of the condensin-2 complex.

Its subcellular location is the nucleus. The protein localises to the chromosome. The protein resides in the centromere. Its function is as follows. Chromosomal protein which is recruited to mitotic chromosomes by hcp-3 (CENP-A) and hcp-4 (CENP-C). Involved in chromosome segregation during mitosis, playing a role in chromosome condensation and in maintaining chromosome morphology, rigidity and orientation during mitosis. In Caenorhabditis elegans, this protein is Condensin-2 complex subunit hcp-6.